The following is a 228-amino-acid chain: Claudin-10 (228 aa).

Residues 1 to 21 (MASTASEIIAFMVSISGWVLV) form a helical membrane-spanning segment. Topologically, residues 22–80 (SSTLPTDYWKVSTIDGTVITTATYWANLWKACVTDSTGVSNCKDFPSMLALDGYIQACR) are extracellular. The chain crosses the membrane as a helical span at residues 81–101 (GLMIAAVSLGFFGSIFALFGM). At 102 to 115 (KCTKVGGSDKAKAK) the chain is on the cytoplasmic side. The helical transmembrane segment at 116–136 (IACLAGIVFILSGLCSMTGCS) threads the bilayer. Over 137–160 (LYANKITTEFFDPLFVEQKYELGA) the chain is Extracellular. A helical membrane pass occupies residues 161-181 (ALFIGWAGASLCIIGGVIFCF). Over 182–228 (SISDNNKTPRYAYNGATSVMSSRTKYHGGEDFKTTNPSKQFDKNAYV) the chain is Cytoplasmic.

It belongs to the claudin family. As to quaternary structure, can form homodimers both in trans (interaction between CLDN10 molecules in opposing membranes) and in cis (interaction between CLDN10 molecules within one membrane). Interacts with CLDN19.

The protein localises to the cell junction. It localises to the tight junction. It is found in the cell membrane. It carries out the reaction Na(+)(in) = Na(+)(out). It catalyses the reaction Li(+)(in) = Li(+)(out). The enzyme catalyses K(+)(in) = K(+)(out). The catalysed reaction is Rb(+)(in) = Rb(+)(out). It carries out the reaction Cs(+)(in) = Cs(+)(out). It catalyses the reaction NH4(+)(in) = NH4(+)(out). The enzyme catalyses methylamine(out) = methylamine(in). The catalysed reaction is Mg(2+)(in) = Mg(2+)(out). It carries out the reaction Ca(2+)(in) = Ca(2+)(out). It catalyses the reaction Sr(2+)(in) = Sr(2+)(out). The enzyme catalyses chloride(in) = chloride(out). The catalysed reaction is nitrate(in) = nitrate(out). Its function is as follows. Forms paracellular channels: polymerizes in tight junction strands with cation- and anion-selective channels through the strands, conveying epithelial permeability in a process known as paracellular tight junction permeability. In sweat glands and in the thick ascending limb (TAL) of Henle's loop in kidney, it controls paracellular sodium permeability which is essential for proper sweat production and renal function. In renal proximal tubules, it conveys selective chloride over hydrogencarbonate anion permeability which is required for renal chloride reabsorption and salt homeostasis. The protein is Claudin-10 (CLDN10) of Pongo abelii (Sumatran orangutan).